We begin with the raw amino-acid sequence, 286 residues long: 2-hydroxy-6-oxo-6-phenylhexa-2,4-dienoate hydrolase (286 aa).

Substrate contacts are provided by residues glycine 42–glycine 43, asparagine 51, asparagine 111, serine 180, and arginine 190. The active-site Proton acceptor is the histidine 265. Tryptophan 266 is a substrate binding site.

Belongs to the AB hydrolase superfamily. BphD family. Homodimer.

The enzyme catalyses 2,6-dioxo-6-phenylhexa-3-enoate + H2O = 2-oxopent-4-enoate + benzoate + H(+). It functions in the pathway xenobiotic degradation; biphenyl degradation; 2-hydroxy-2,4-pentadienoate and benzoate from biphenyl: step 4/4. Inhibited by 3-Cl HOPDA. Catalyzes an unusual C-C bond hydrolysis of 2-hydroxy-6-oxo-6-phenylhexa-2,4-dienoic acid (HOPDA) to produce benzoic acid and 2-hydroxy-2,4-pentadienoic acid (HPD). The polypeptide is 2-hydroxy-6-oxo-6-phenylhexa-2,4-dienoate hydrolase (bphD) (Paraburkholderia xenovorans (strain LB400)).